The chain runs to 149 residues: MHCPFCSATDTKVIDSRLVAEGHQVRRRRECTECHERFTTFEGAELVMPRVIKRDGSRQPFDEEKLQSGMLRAVEKRPVSMDEIEQALSKIKSTLRATGEREVPSEMVGNLMMEQLMNLDKVAYIRFASVYRAFEDVSEFGEAIAKLQK.

A zinc finger spans residues 3-34 (CPFCSATDTKVIDSRLVAEGHQVRRRRECTEC). An ATP-cone domain is found at 49–139 (PRVIKRDGSR…VYRAFEDVSE (91 aa)).

It belongs to the NrdR family. Zn(2+) is required as a cofactor.

Functionally, negatively regulates transcription of bacterial ribonucleotide reductase nrd genes and operons by binding to NrdR-boxes. The chain is Transcriptional repressor NrdR from Shewanella putrefaciens (strain CN-32 / ATCC BAA-453).